The following is a 218-amino-acid chain: MVQNKLKKSVGWAALKYVQSSRIIGVGTGSTVTYFIEALNSIKEKIEGVVSSSNYSSNQLKKIGIPLCNLNSLHELDVYVDSADEIDSHMQMIKGKGGALTKEKIIAAAAKKFICIVDSSKQVNILGRGPLPIEVIPMARSLVARELVRLGGLPEYRHNVITDNGNNILDVYNMKIVNASLLETKINNIPGVVSVGIFAKRRADIVLIGTREGIKIIE.

Substrate is bound by residues 28–31 (TGST), 81–84 (DSAD), and 94–97 (KGKG). The active-site Proton acceptor is the Glu103. A substrate-binding site is contributed by Lys121.

This sequence belongs to the ribose 5-phosphate isomerase family. As to quaternary structure, homodimer.

The enzyme catalyses aldehydo-D-ribose 5-phosphate = D-ribulose 5-phosphate. It participates in carbohydrate degradation; pentose phosphate pathway; D-ribose 5-phosphate from D-ribulose 5-phosphate (non-oxidative stage): step 1/1. Catalyzes the reversible conversion of ribose-5-phosphate to ribulose 5-phosphate. This is Ribose-5-phosphate isomerase A from Blochmanniella pennsylvanica (strain BPEN).